Reading from the N-terminus, the 409-residue chain is Peptidase T (409 aa).

His78 is a binding site for Zn(2+). Asp80 is a catalytic residue. Asp140 contacts Zn(2+). Glu173 functions as the Proton acceptor in the catalytic mechanism. 3 residues coordinate Zn(2+): Glu174, Asp196, and His379.

It belongs to the peptidase M20B family. Zn(2+) is required as a cofactor.

It is found in the cytoplasm. The enzyme catalyses Release of the N-terminal residue from a tripeptide.. Its function is as follows. Cleaves the N-terminal amino acid of tripeptides. The sequence is that of Peptidase T from Salmonella dublin (strain CT_02021853).